Consider the following 936-residue polypeptide: VPS35 endosomal protein-sorting factor-like (936 aa).

Disordered regions lie at residues 43–69 (SKTKKVSRKGSTSSTSSSSSSSVVDPL) and 87–113 (DPAATVTVTESSRKKRDKDDNSFVGPD). Low complexity predominate over residues 51–69 (KGSTSSTSSSSSSSVVDPL). At Ser-265 the chain carries Phosphoserine. Residues 672 to 692 (AFVRACVAYCFITIPSLVGIF) form a helical membrane-spanning segment.

It belongs to the VPS35L family. In terms of assembly, component of the heterotrimeric retriever complex formed by VPS26C, VPS29 and VPS35L. Interacts with VPS29. Interacts with COMMD1, CCDC93 and CCDC22; associates with the CCC (COMMD/CCDC22/CCDC93) complex which contains at least COMMD1 (and possibly other COMM domain-containing proteins), CCDC22 and CCDC93. Interacts with WASHC1, WASHC2A and WASHC2C. Interacts with SNX17 and SNX31.

It is found in the membrane. It localises to the endosome. Functionally, acts as a component of the retriever complex. The retriever complex is a heterotrimeric complex related to retromer cargo-selective complex (CSC) and essential for retromer-independent retrieval and recycling of numerous cargos such as integrin alpha-5/beta-1 (ITGA5:ITGB1). The recruitment of the retriever complex to the endosomal membrane involves CCC and WASH complexes. In the endosomes, drives the retrieval and recycling of NxxY-motif-containing cargo proteins by coupling to SNX17, a cargo essential for the homeostatic maintenance of numerous cell surface proteins associated with processes that include cell migration, cell adhesion, nutrient supply and cell signaling. Involved in copper-dependent ATP7A trafficking between the trans-Golgi network and vesicles in the cell periphery; the function is proposed to depend on its association with the CCC complex and cooperation with the WASH complex on early endosomes. Seems not to be required for CCC complex stability. The chain is VPS35 endosomal protein-sorting factor-like from Rattus norvegicus (Rat).